Consider the following 613-residue polypeptide: Isocitrate dehydrogenase kinase/phosphatase (613 aa).

Residues 328 to 334 (APGIRGL) and lysine 349 contribute to the ATP site. Aspartate 384 is a catalytic residue.

Belongs to the AceK family.

It is found in the cytoplasm. It catalyses the reaction L-seryl-[isocitrate dehydrogenase] + ATP = O-phospho-L-seryl-[isocitrate dehydrogenase] + ADP + H(+). Functionally, bifunctional enzyme which can phosphorylate or dephosphorylate isocitrate dehydrogenase (IDH) on a specific serine residue. This is a regulatory mechanism which enables bacteria to bypass the Krebs cycle via the glyoxylate shunt in response to the source of carbon. When bacteria are grown on glucose, IDH is fully active and unphosphorylated, but when grown on acetate or ethanol, the activity of IDH declines drastically concomitant with its phosphorylation. The polypeptide is Isocitrate dehydrogenase kinase/phosphatase (Cupriavidus necator (strain ATCC 17699 / DSM 428 / KCTC 22496 / NCIMB 10442 / H16 / Stanier 337) (Ralstonia eutropha)).